Here is a 327-residue protein sequence, read N- to C-terminus: Cell division protein ZipA (327 aa).

The Periplasmic portion of the chain corresponds to 1 to 5 (MQDLR). A helical membrane pass occupies residues 6-26 (LILIVVGAIAIIALLLHGLWT). The Cytoplasmic portion of the chain corresponds to 27–327 (SRKERSSLFR…REVLDANTIA (301 aa)). Positions 60-71 (GEVRVRTSHPQE) are enriched in basic and acidic residues. The disordered stretch occupies residues 60–182 (GEVRVRTSHP…EPVAPAPEAK (123 aa)). Polar residues-rich tracts occupy residues 94–103 (KSAQVKTASR) and 163–173 (APQQHVESQQE).

This sequence belongs to the ZipA family. In terms of assembly, interacts with FtsZ via their C-terminal domains.

The protein localises to the cell inner membrane. Its function is as follows. Essential cell division protein that stabilizes the FtsZ protofilaments by cross-linking them and that serves as a cytoplasmic membrane anchor for the Z ring. Also required for the recruitment to the septal ring of downstream cell division proteins. This Yersinia pseudotuberculosis serotype O:1b (strain IP 31758) protein is Cell division protein ZipA.